The primary structure comprises 430 residues: GTPase Obg (430 aa).

In terms of domain architecture, Obg spans 1-158; that stretch reads MFVDQVKISL…LEVTLELKLL (158 aa). Positions 118-145 are disordered; sequence RGGRGGRGNSRFATPRNPAPDFSENGEP. In terms of domain architecture, OBG-type G spans 159–329; sequence ADVGLVGFPS…LLYQIADKLE (171 aa). GTP is bound by residues 165 to 172, 190 to 194, 212 to 215, 282 to 285, and 310 to 312; these read GFPSVGKS, FTTIK, DLPG, NKMD, and STI. Residues S172 and T192 each coordinate Mg(2+). Positions 352–430 constitute an OCT domain; sequence KHTPSADKFT…ILGGEFEFVE (79 aa).

It belongs to the TRAFAC class OBG-HflX-like GTPase superfamily. OBG GTPase family. In terms of assembly, monomer. It depends on Mg(2+) as a cofactor.

The protein resides in the cytoplasm. Its function is as follows. An essential GTPase which binds GTP, GDP and possibly (p)ppGpp with moderate affinity, with high nucleotide exchange rates and a fairly low GTP hydrolysis rate. Plays a role in control of the cell cycle, stress response, ribosome biogenesis and in those bacteria that undergo differentiation, in morphogenesis control. The protein is GTPase Obg of Staphylococcus epidermidis (strain ATCC 12228 / FDA PCI 1200).